We begin with the raw amino-acid sequence, 3036 residues long: DmX-like protein 2 (3036 aa).

WD repeat units lie at residues 108–145, 167–207, and 230–278; these read FLSS…ILEE, KTSV…KSSI, and AHPR…EDCL. Ser-326 is modified (phosphoserine). The tract at residues 417 to 480 is disordered; that stretch reads KQVDHENDDA…EGSPRTYSRL (64 aa). A compositionally biased stretch (acidic residues) spans 422–434; the sequence is ENDDADREDEEHS. The segment covering 435–473 has biased composition (basic and acidic residues); it reads QEDRERGLHMKLDHDLSLDRESEAGTGSSEHEDGEREGS. At Ser-473 the chain carries Phosphoserine. The WD 4 repeat unit spans residues 492–532; sequence DRKIETLLTEWNKNPDMLFTIHPVDGTFLVWHVKYLDEYNP. Ser-588 is modified (phosphoserine). WD repeat units follow at residues 595–634, 751–803, and 878–920; these read HSRS…KSAF, LHTS…RKLL, and QPSQ…VQAC. Residues 932–959 form a disordered region; that stretch reads SLLSVPGQKNVDSSPETSPSVSPMPHSS. Phosphoserine is present on residues Ser-944 and Ser-945. A compositionally biased stretch (low complexity) spans 949–959; sequence SPSVSPMPHSS. One copy of the WD 8 repeat lies at 1000–1037; sequence LSSSSIYPVCLAPYLVVTTCSDNKVRFWKCCMEANPEC. Phosphoserine occurs at positions 1140, 1143, and 1151. WD repeat units follow at residues 1163–1204 and 1244–1281; these read PNIK…VTEQ and GTPS…VKFG. Residues Ser-1287 and Ser-1400 each carry the phosphoserine modification. A Phosphothreonine modification is found at Thr-1417. Ser-1857 bears the Phosphoserine mark. Over residues 1927–1936 the composition is skewed to basic and acidic residues; it reads ISHRMDDVPS. The disordered stretch occupies residues 1927-1952; it reads ISHRMDDVPSHSKALSDGNGSSGIEW. Position 1984 is a phosphoserine (Ser-1984). The tract at residues 1999–2033 is disordered; sequence KSTDAREKDKQSDQKASDPNMLLTPQEEDDPEGDT. The segment covering 2001 to 2014 has biased composition (basic and acidic residues); sequence TDAREKDKQSDQKA. Phosphothreonine is present on Thr-2022. The segment covering 2024-2033 has biased composition (acidic residues); it reads QEEDDPEGDT. Residues 2122-2153 are a coiled coil; it reads GSYERHQIERRRLQAKREHAERRKSWLQKNQD. A phosphoserine mark is found at Ser-2399 and Ser-2640. WD repeat units follow at residues 2761–2800, 2804–2843, 2850–2892, 2898–2937, 2940–2979, and 2992–3030; these read RNLH…QLVC, AGNA…SNPK, CHSK…GNSL, CHDH…LIHT, AHDS…LIHS, and NIGA…NIPN.

In terms of assembly, interacts with MADD and RAB3GAP.

It localises to the cytoplasmic vesicle. The protein resides in the secretory vesicle. It is found in the synaptic vesicle membrane. The protein localises to the neuronal dense core vesicle. Functionally, may serve as a scaffold protein for MADD and RAB3GA on synaptic vesicles. Plays a role in the brain as a key controller of neuronal and endocrine homeostatic processes. The chain is DmX-like protein 2 (DMXL2) from Homo sapiens (Human).